Here is a 292-residue protein sequence, read N- to C-terminus: 33 kDa chaperonin (292 aa).

2 disulfide bridges follow: Cys236–Cys238 and Cys269–Cys272.

The protein belongs to the HSP33 family. Under oxidizing conditions two disulfide bonds are formed involving the reactive cysteines. Under reducing conditions zinc is bound to the reactive cysteines and the protein is inactive.

Its subcellular location is the cytoplasm. Its function is as follows. Redox regulated molecular chaperone. Protects both thermally unfolding and oxidatively damaged proteins from irreversible aggregation. Plays an important role in the bacterial defense system toward oxidative stress. In Ruminiclostridium cellulolyticum (strain ATCC 35319 / DSM 5812 / JCM 6584 / H10) (Clostridium cellulolyticum), this protein is 33 kDa chaperonin.